A 244-amino-acid chain; its full sequence is Transcription initiation factor TFIID subunit 14 (244 aa).

Residues 1-134 (MVATVKRTIR…PLLTEELAKS (134 aa)) form the YEATS domain. 2 acylated histone binding regions span residues 59 to 61 (HPT) and 81 to 83 (WGG). Positions 133–169 (KSGSTEETTANTGTIGKRRTTTNTTAEPKAKRAKTGS) are disordered. Residues 143–157 (NTGTIGKRRTTTNTT) are compositionally biased toward low complexity. K181 participates in a covalent cross-link: Glycyl lysine isopeptide (Lys-Gly) (interchain with G-Cter in ubiquitin).

The protein belongs to the TAF14 family. In terms of assembly, the 1.2 MDa TFIID complex is composed of TATA binding protein (TBP) and the 14 TBP-associated factors. One copy of each TAF1, TAF2, TAF3, TAF7, TAF8, TAF11, TAF13, two copies of each TAF4, TAF5, TAF6, TAF9, TAF10, TAF12, and three copies of TAF14. TFIIF is composed of three different subunits: TFG1/RAP74, TFG2/RAP30 and TAF14. Component of the SWI/SNF global transcription activator complex. The 1.14 MDa SWI/SNF complex is composed of 11 different subunits: one copy each of SWI1, SNF2/SWI2, SNF5, SNF12/SWP73, ARP7/SWP61, ARP9/SWP59; two copies each of SWI3, SNF6, SNF11, SWP82; and three copies of TAF14/SWP29. Component of the chromatin-remodeling INO80 complex, at least composed of ARP4, ARP5, ARP8, RVB1, RVB2, TAF14, NHP10, IES1, IES3, IES4, IES6, ACT1, IES2, IES5 and INO80. Component of the NuA3 histone acetyltransferase (HAT) complex. The NuA3 HAT complex has 2 functionally distinct forms that participate in transcription. The NuA3b HAT complex contains an additional subunit, PDP3.

It is found in the nucleus. Functions as a component of the DNA-binding general transcription factor complex TFIID, the RNA polymerase II associated general transcription factor complex TFIIF, and the chromatin-remodeling complex SWI/SNF. Binding of TFIID to a promoter (with or without TATA element) is the initial step in preinitiation complex (PIC) formation. TFIID plays a key role in the regulation of gene expression by RNA polymerase II through different activities such as transcription activator interaction, core promoter recognition and selectivity, TFIIA and TFIIB interaction, chromatin modification (histone acetylation by TAF1), facilitation of DNA opening and initiation of transcription. TFIIF is essential for the initiation of transcription by RNA polymerase II. TFIIF functions include the recruitment of RNA polymerase II to the promoter bound DNA-TBP-TFIIB complex, decreasing the affinity of RNA polymerase II for non-specific DNA, allowing for the subsequent recruitment of TFIIE and TFIIH, and facilitating RNA polymerase II elongation. TAF14 acts as a chromatin reader that specifically recognizes and binds histones that are acylated. Recognizes and binds histone H3 acetylated or crotonylated at 'Lys-9' (H3K9ac and H3K9cr, respectively), with some preference for crotonylated lysine. Component of the SWI/SNF complex, an ATP-dependent chromatin-remodeling complex, is required for the positive and negative regulation of gene expression of a large number of genes. It changes chromatin structure by altering DNA-histone contacts within a nucleosome, leading eventually to a change in nucleosome position, thus facilitating or repressing binding of gene-specific transcription factors. Component of the NuA3 histone acetyltransferase complex. The NuA3 HAT complex has 2 functionally distinct forms. NuA3a binds H3K4me3, through the PHD finger of YNG1, and acetylates H3K14 at the promoter region of actively transcribed genes to promote transcription initiation. NuA3b binds H3K36me3 at the coding regions of actively transcribed genes, through the PWWP domain of PDP3, and coordinates transcription elongation. Does not bind DNA. The chain is Transcription initiation factor TFIID subunit 14 (TAF14) from Saccharomyces cerevisiae (strain ATCC 204508 / S288c) (Baker's yeast).